The chain runs to 607 residues: Siderochrome iron transporter 2 (607 aa).

The disordered stretch occupies residues 1-46 (MGLFGSFGARNKATPQVPPGAVAKAPEGTPKGPETNDQPDMDSSRL). A run of 13 helical transmembrane segments spans residues 86–106 (VWAT…QSGI), 129–149 (ILSS…LNLW), 152–172 (AEGF…LAAC), 180–200 (AGYV…DVFV), 210–230 (AFTF…APLA), 242–262 (WAYG…AVVF), 297–317 (IIGA…FSLA), 326–346 (SAAF…FAAW), 367–387 (LGAC…DLYF), 404–424 (YMTQ…GLWV), 432–452 (HTCL…MIHF), 459–479 (IGYV…LVIG), and 499–519 (FIGL…AAIY). Asn538 carries an N-linked (GlcNAc...) asparagine glycan. The chain crosses the membrane as a helical span at residues 573 to 593 (FGAVAATCILILGIPAIAVWK).

It belongs to the major facilitator superfamily.

It is found in the cell membrane. In terms of biological role, major facilitator transporter involved in ferrichrome (FC) uptake. In Aspergillus fumigatus (strain ATCC MYA-4609 / CBS 101355 / FGSC A1100 / Af293) (Neosartorya fumigata), this protein is Siderochrome iron transporter 2.